The primary structure comprises 44 residues: uncharacterized protein (44 aa).

The N-terminal stretch at 1 to 16 (MRISLLAVILALLFVA) is a signal peptide.

This is an uncharacterized protein from Helicobacter pylori (strain ATCC 700392 / 26695) (Campylobacter pylori).